The following is a 629-amino-acid chain: DNA-directed RNA polymerase subunit beta' (629 aa).

Residues Cys70, Cys72, Cys85, and Cys88 each coordinate Zn(2+). Mg(2+) is bound by residues Asp472, Asp474, and Asp476.

The protein belongs to the RNA polymerase beta' chain family. RpoC1 subfamily. In terms of assembly, in plastids the minimal PEP RNA polymerase catalytic core is composed of four subunits: alpha, beta, beta', and beta''. When a (nuclear-encoded) sigma factor is associated with the core the holoenzyme is formed, which can initiate transcription. Mg(2+) serves as cofactor. It depends on Zn(2+) as a cofactor.

It is found in the plastid. Its subcellular location is the chloroplast. The enzyme catalyses RNA(n) + a ribonucleoside 5'-triphosphate = RNA(n+1) + diphosphate. DNA-dependent RNA polymerase catalyzes the transcription of DNA into RNA using the four ribonucleoside triphosphates as substrates. The protein is DNA-directed RNA polymerase subunit beta' of Porphyra purpurea (Red seaweed).